The sequence spans 270 residues: tRNA pseudouridine synthase A (270 aa).

The active-site Nucleophile is Asp-51. Tyr-109 contacts substrate.

Belongs to the tRNA pseudouridine synthase TruA family. As to quaternary structure, homodimer.

It catalyses the reaction uridine(38/39/40) in tRNA = pseudouridine(38/39/40) in tRNA. In terms of biological role, formation of pseudouridine at positions 38, 39 and 40 in the anticodon stem and loop of transfer RNAs. This Burkholderia thailandensis (strain ATCC 700388 / DSM 13276 / CCUG 48851 / CIP 106301 / E264) protein is tRNA pseudouridine synthase A.